The following is a 283-amino-acid chain: Serine protease 57 (283 aa).

The signal sequence occupies residues 1–31 (MGLGLRGWGRPLLTVATALMLPVKPPAGSWG). Residues 34–263 (IIGGHEVTPH…FVAWIWDVVR (230 aa)) enclose the Peptidase S1 domain. Residues Cys59 and Cys75 are joined by a disulfide bond. Active-site charge relay system residues include His74 and Asp122. N-linked (GlcNAc...) asparagine glycosylation is found at Asn129 and Asn189. Cystine bridges form between Cys157-Cys224, Cys188-Cys202, and Cys214-Cys239. Ser218 serves as the catalytic Charge relay system.

This sequence belongs to the peptidase S1 family. Post-translationally, after cleavage of the signal peptide, the N-terminus is probably further processed by CTSC. Processing by CTSC is probably required for accumulation in cytoplasmic granules; in the absence of CTSC the protein does not accumulate. In terms of processing, N-glycosylated. Detected in peripheral blood neutrophil granulocytes, but not in other types of leukocytes. Detected in neutrophils and neutrophil precursors in bone marrow (at protein level). Detected in myeloblasts and promyelocytes in bone marrow.

It localises to the cytoplasmic granule lumen. The protein resides in the secreted. Its activity is regulated as follows. Inhibited by SERPINA1, SERPINC1 and SERPING1. Functionally, serine protease that cleaves preferentially after Arg residues. Can also cleave after citrulline (deimidated arginine) and methylarginine residues. This Homo sapiens (Human) protein is Serine protease 57 (PRSS57).